We begin with the raw amino-acid sequence, 532 residues long: Nectin-4 (532 aa).

The N-terminal stretch at 1 to 30 (MGPLHGALLPPISVTVSLLILLLCAPGGRC) is a signal peptide. An Ig-like V-type domain is found at 31–142 (GVVHTEKSMT…GNFDAELELK (112 aa)). Over 31–344 (GVVHTEKSMT…TKIDLVSVSL (314 aa)) the chain is Extracellular. Cystine bridges form between cysteine 51–cysteine 125, cysteine 169–cysteine 221, and cysteine 266–cysteine 312. Ig-like C2-type domains lie at 146–235 (PPLP…KRIT) and 244–328 (AEVS…AIVS). The segment at 152-179 (GPGPPLTEGEGKSLAASCTAEGNPAPTL) is disordered. Asparagine 189 and asparagine 282 each carry an N-linked (GlcNAc...) asparagine glycan. A helical membrane pass occupies residues 345-365 (GSVGILTAVLLVVLVITLLLV). Topologically, residues 366–532 (NRHHKRQTKQ…IYINGRGHLV (167 aa)) are cytoplasmic. The tract at residues 453–491 (QTELLSTVPDEEVKEDGEEPEQVEQSLEKEPNPTEPDGM) is disordered. A compositionally biased stretch (acidic residues) spans 461–474 (PDEEVKEDGEEPEQ).

The protein belongs to the nectin family.

Its subcellular location is the cell membrane. Its function is as follows. May be involved in cell adhesion. The polypeptide is Nectin-4 (Xenopus tropicalis (Western clawed frog)).